The following is a 693-amino-acid chain: TBC1 domain family member 14 (693 aa).

Residue Ser91 is modified to Phosphoserine. Disordered stretches follow at residues 108 to 130 and 271 to 304; these read PSCAPPAPSSTEREQSVRKSSTF and NAQKDSKRIQKEYEDKAGRPSKPPSPKQNVRKNL. Over residues 271-288 the composition is skewed to basic and acidic residues; it reads NAQKDSKRIQKEYEDKAG. Ser295 carries the phosphoserine modification. A Rab-GAP TBC domain is found at 401 to 611; sequence GIPPSVRGKV…RIWDVFCRDG (211 aa).

Interacts with ULK1. May interact with RAB11A and RAB11B, but does not exhibit any GTPase-activating activity toward these proteins. Interacts with TRAPPC8.

It is found in the golgi apparatus. The protein localises to the cis-Golgi network. The protein resides in the trans-Golgi network. In terms of biological role, plays a role in the regulation of starvation-induced autophagosome formation. Together with the TRAPPIII complex, regulates a constitutive trafficking step from peripheral recycling endosomes to the early Golgi, maintaining the cycling pool of ATG9 required for initiation of autophagy. This Homo sapiens (Human) protein is TBC1 domain family member 14 (TBC1D14).